Reading from the N-terminus, the 141-residue chain is Head virion protein G6P (141 aa).

The next 3 membrane-spanning stretches (helical) occupy residues 3-23 (WLSGFLDQIIAFFQWIWDFFA), 33-53 (GLVVATKASMYAALQTLILLI), and 80-100 (LPGPIAAGLAFFGVPQALNII).

The protein belongs to the inovirus G6P protein family. In terms of assembly, interacts with G3P; this interaction is required for proper integration of G3P and G6P into the virion.

Its subcellular location is the virion. It localises to the host membrane. In terms of biological role, plays essential roles both in the entry of the viral genome into the bacterial host and in budding process. The formation of the G3P-G6P complex termed adsorption complex is essential for correct termination of filamentous phage assembly. This is Head virion protein G6P (VI) from Pseudomonas phage Pf1 (Bacteriophage Pf1).